The primary structure comprises 71 residues: Large ribosomal subunit protein bL31 (71 aa).

Residues Cys-16, Cys-18, Cys-37, and Cys-40 each coordinate Zn(2+).

Belongs to the bacterial ribosomal protein bL31 family. Type A subfamily. Part of the 50S ribosomal subunit. It depends on Zn(2+) as a cofactor.

Its function is as follows. Binds the 23S rRNA. The chain is Large ribosomal subunit protein bL31 from Pseudomonas putida (strain GB-1).